The following is a 55-amino-acid chain: Beta-toxin Cn7 (55 aa).

Residues 1-55 (KEGYIVNYHDGCKYECYKLGDNDYCLRECKLRVGKGAGGYCYAFACWCTHLYEQA) form the LCN-type CS-alpha/beta domain. 3 disulfide bridges follow: C16-C41, C25-C46, and C29-C48.

The protein belongs to the long (3 C-C) scorpion toxin superfamily. Sodium channel inhibitor family. Beta subfamily. In terms of tissue distribution, expressed by the venom gland.

It localises to the secreted. Functionally, beta toxins bind voltage-independently at site-4 of sodium channels (Nav) and shift the voltage of activation toward more negative potentials thereby affecting sodium channel activation and promoting spontaneous and repetitive firing. The protein is Beta-toxin Cn7 of Centruroides noxius (Mexican scorpion).